Consider the following 350-residue polypeptide: Chemokine C-C motif receptor-like 2 (350 aa).

Topologically, residues Met-1–Tyr-43 are extracellular. Asn-3 carries N-linked (GlcNAc...) asparagine glycosylation. A helical transmembrane segment spans residues Leu-44–Val-64. The Cytoplasmic portion of the chain corresponds to Lys-65–Asn-74. The helical transmembrane segment at Ile-75–Val-95 threads the bilayer. Over His-96–Lys-110 the chain is Extracellular. Cys-109 and Cys-187 are disulfide-bonded. A helical membrane pass occupies residues Ile-111–Thr-131. Topologically, residues Val-132–Arg-149 are cytoplasmic. A helical membrane pass occupies residues Met-150–Leu-170. The Extracellular segment spans residues Pro-171–His-204. The helical transmembrane segment at Phe-205–Cys-225 threads the bilayer. Residues Tyr-226–Lys-244 are Cytoplasmic-facing. Residues Leu-245–Phe-265 form a helical membrane-spanning segment. Topologically, residues Leu-266–Thr-288 are extracellular. Residues Leu-289 to Phe-309 form a helical membrane-spanning segment. The Cytoplasmic portion of the chain corresponds to Asp-310–Met-350. The interval Pro-329–Met-350 is disordered.

This sequence belongs to the G-protein coupled receptor 1 family.

The protein localises to the cell membrane. Receptor for CCL19 and chemerin/RARRES2. Does not appear to be a signaling receptor, but may have a role in modulating chemokine-triggered immune responses by capturing and internalizing CCL19 or by presenting RARRES2 ligand to CMKLR1, a functional signaling receptor. Plays a critical role for the development of Th2 responses. This Sus scrofa (Pig) protein is Chemokine C-C motif receptor-like 2 (CCRL2).